We begin with the raw amino-acid sequence, 96 residues long: Large ribosomal subunit protein eL43 (96 aa).

Residues 41-62 (CPVCAFPKLKRAGTSIWVCEKC) form a C4-type zinc finger.

It belongs to the eukaryotic ribosomal protein eL43 family. Zn(2+) serves as cofactor.

The polypeptide is Large ribosomal subunit protein eL43 (Methanococcus maripaludis (strain C5 / ATCC BAA-1333)).